A 538-amino-acid chain; its full sequence is Methyl-accepting chemotaxis protein NahY (538 aa).

Over 1–9 (MQQFTIRTR) the chain is Cytoplasmic. A helical membrane pass occupies residues 10 to 30 (LLMLVGAMFIGFITIELMGFS). The Periplasmic portion of the chain corresponds to 31–187 (ALQRGVASLN…AVVLYDSSRT (157 aa)). Residues 188–208 (MLALLLLGILICGGVFATRLI) form a helical membrane-spanning segment. An HAMP domain is found at 209–261 (RSIIHPLTTLKDAAARVALGDLSQSIQVSGRNEVTDVQQSVQAMQANLRNTLQ). At 209 to 538 (RSIIHPLTTL…LNNLVNRFSM (330 aa)) the chain is on the cytoplasmic side. One can recognise a Methyl-accepting transducer domain in the interval 266-502 (SAAQLAAAAE…EVDRNLVAIS (237 aa)).

Belongs to the methyl-accepting chemotaxis (MCP) protein family.

The protein localises to the cell inner membrane. Chemotactic-signal transducers respond to changes in the concentration of attractants and repellents in the environment, transduce a signal from the outside to the inside of the cell, and facilitate sensory adaptation through the variation of the level of methylation. Chemoreceptor for naphthalene or a related compound. May facilitate biodegradation. This Pseudomonas putida (Arthrobacter siderocapsulatus) protein is Methyl-accepting chemotaxis protein NahY (nahY).